We begin with the raw amino-acid sequence, 428 residues long: Trigger factor (428 aa).

Residues 163-248 (GDTVVIDFEG…VHEVKAKQLP (86 aa)) enclose the PPIase FKBP-type domain.

Belongs to the FKBP-type PPIase family. Tig subfamily.

The protein resides in the cytoplasm. It catalyses the reaction [protein]-peptidylproline (omega=180) = [protein]-peptidylproline (omega=0). In terms of biological role, involved in protein export. Acts as a chaperone by maintaining the newly synthesized protein in an open conformation. Functions as a peptidyl-prolyl cis-trans isomerase. The chain is Trigger factor from Geobacillus kaustophilus (strain HTA426).